The chain runs to 467 residues: Coiled-coil domain-containing protein 174 (467 aa).

2 disordered regions span residues 40–77 (VFGK…EEQK) and 124–162 (EMEA…SEEW). Residues 63–99 (NRAEKDAEQKIEEQKTLDKAREKLEEKAKLYEKMTKG) are a coiled coil. Composition is skewed to basic and acidic residues over residues 64–77 (RAEK…EEQK) and 124–139 (EMEA…KAGE). Ser-197 carries the post-translational modification Phosphoserine. A coiled-coil region spans residues 267–309 (LEMLREQTTDQRTKRENIKEKRKAILEARLAKLRQKKMKKSKE). 2 disordered regions span residues 299-363 (LRQK…HIRE) and 378-453 (RQSD…TVTF). Pro residues predominate over residues 324 to 336 (PLPPEPEAVPTPR). Basic and acidic residues-rich tracts occupy residues 348–363 (VQER…HIRE) and 378–389 (RQSDLRAERDPE). Residues 425-437 (PDQSHGPSPEHTS) show a composition bias toward polar residues. Residues 439 to 448 (TPAPDNPPQA) are compositionally biased toward pro residues.

In terms of tissue distribution, widely expressed.

It is found in the nucleus. In terms of biological role, probably involved in neuronal development. In Homo sapiens (Human), this protein is Coiled-coil domain-containing protein 174 (CCDC174).